The sequence spans 364 residues: UDP-N-acetylglucosamine--N-acetylmuramyl-(pentapeptide) pyrophosphoryl-undecaprenol N-acetylglucosamine transferase 1 (364 aa).

UDP-N-acetyl-alpha-D-glucosamine is bound by residues 10 to 12 (TGG), N124, S195, I250, and Q295.

Belongs to the glycosyltransferase 28 family. MurG subfamily.

It localises to the cell membrane. The enzyme catalyses di-trans,octa-cis-undecaprenyl diphospho-N-acetyl-alpha-D-muramoyl-L-alanyl-D-glutamyl-meso-2,6-diaminopimeloyl-D-alanyl-D-alanine + UDP-N-acetyl-alpha-D-glucosamine = di-trans,octa-cis-undecaprenyl diphospho-[N-acetyl-alpha-D-glucosaminyl-(1-&gt;4)]-N-acetyl-alpha-D-muramoyl-L-alanyl-D-glutamyl-meso-2,6-diaminopimeloyl-D-alanyl-D-alanine + UDP + H(+). Its pathway is cell wall biogenesis; peptidoglycan biosynthesis. Cell wall formation. Catalyzes the transfer of a GlcNAc subunit on undecaprenyl-pyrophosphoryl-MurNAc-pentapeptide (lipid intermediate I) to form undecaprenyl-pyrophosphoryl-MurNAc-(pentapeptide)GlcNAc (lipid intermediate II). This is UDP-N-acetylglucosamine--N-acetylmuramyl-(pentapeptide) pyrophosphoryl-undecaprenol N-acetylglucosamine transferase 1 from Bacillus thuringiensis subsp. konkukian (strain 97-27).